The following is an 873-amino-acid chain: Leucine--tRNA ligase (873 aa).

Residues 42–52 carry the 'HIGH' region motif; sequence PYPSGKLHMGH. Positions 624-643 are disordered; that stretch reads PVEIGGTEKMSKSKNNGVDP. Residues 632–636 carry the 'KMSKS' region motif; sequence KMSKS. Lysine 635 contributes to the ATP binding site.

This sequence belongs to the class-I aminoacyl-tRNA synthetase family.

The protein resides in the cytoplasm. The enzyme catalyses tRNA(Leu) + L-leucine + ATP = L-leucyl-tRNA(Leu) + AMP + diphosphate. This is Leucine--tRNA ligase from Pseudomonas paraeruginosa (strain DSM 24068 / PA7) (Pseudomonas aeruginosa (strain PA7)).